A 61-amino-acid chain; its full sequence is Aerolysin regulatory protein (61 aa).

Positions 1 to 14 (MMIKRHLPQPRHRE) are enriched in basic residues. Positions 1-61 (MMIKRHLPQP…GQTHTGPQIR (61 aa)) are disordered. The span at 51–61 (DGQTHTGPQIR) shows a compositional bias: polar residues.

Regulation of the expression of aerolysin. This is Aerolysin regulatory protein (aerC) from Aeromonas sobria.